The following is a 203-amino-acid chain: Orotate phosphoribosyltransferase (203 aa).

5-phospho-alpha-D-ribose 1-diphosphate is bound by residues arginine 94, lysine 98, histidine 100, and 120–128 (EDLISTGGS). Serine 124 is an orotate binding site.

Belongs to the purine/pyrimidine phosphoribosyltransferase family. PyrE subfamily. Homodimer. Requires Mg(2+) as cofactor.

It carries out the reaction orotidine 5'-phosphate + diphosphate = orotate + 5-phospho-alpha-D-ribose 1-diphosphate. Its pathway is pyrimidine metabolism; UMP biosynthesis via de novo pathway; UMP from orotate: step 1/2. In terms of biological role, catalyzes the transfer of a ribosyl phosphate group from 5-phosphoribose 1-diphosphate to orotate, leading to the formation of orotidine monophosphate (OMP). This Staphylococcus aureus (strain COL) protein is Orotate phosphoribosyltransferase.